Consider the following 195-residue polypeptide: Protein GrpE (195 aa).

Residues 1-30 (MSEQEKVEQEEISAELETQNEQEKPMEETE) form a disordered region. Acidic residues predominate over residues 10 to 20 (EEISAELETQN).

It belongs to the GrpE family. In terms of assembly, homodimer.

The protein resides in the cytoplasm. In terms of biological role, participates actively in the response to hyperosmotic and heat shock by preventing the aggregation of stress-denatured proteins, in association with DnaK and GrpE. It is the nucleotide exchange factor for DnaK and may function as a thermosensor. Unfolded proteins bind initially to DnaJ; upon interaction with the DnaJ-bound protein, DnaK hydrolyzes its bound ATP, resulting in the formation of a stable complex. GrpE releases ADP from DnaK; ATP binding to DnaK triggers the release of the substrate protein, thus completing the reaction cycle. Several rounds of ATP-dependent interactions between DnaJ, DnaK and GrpE are required for fully efficient folding. This Histophilus somni (strain 2336) (Haemophilus somnus) protein is Protein GrpE.